Here is a 280-residue protein sequence, read N- to C-terminus: Mesaconyl-C(4)-CoA hydratase (280 aa).

The protein belongs to the HTD2 family. As to quaternary structure, homodimer.

The enzyme catalyses (3S)-citramalyl-CoA = 3-methylfumaryl-CoA + H2O. With respect to regulation, inhibited by 3-methylfumaryl-CoA concentrations above 0.3 mM. Its function is as follows. Involved in the glyoxylate assimilation cycle used to regenerate acetyl-CoA and produce pyruvate as universal precursor for biosynthesis. Catalyzes the hydration of 3-methylfumaryl-CoA (mesaconyl-C4-CoA) to (3S)-citramalyl-CoA. In Chloroflexus aurantiacus (strain ATCC 29366 / DSM 635 / J-10-fl), this protein is Mesaconyl-C(4)-CoA hydratase (meh).